The primary structure comprises 653 residues: Fructose-1,6-bisphosphatase class 3 (653 aa).

The protein belongs to the FBPase class 3 family. Mn(2+) serves as cofactor.

It catalyses the reaction beta-D-fructose 1,6-bisphosphate + H2O = beta-D-fructose 6-phosphate + phosphate. Its pathway is carbohydrate biosynthesis; gluconeogenesis. This chain is Fructose-1,6-bisphosphatase class 3, found in Listeria monocytogenes serotype 4b (strain CLIP80459).